A 195-amino-acid chain; its full sequence is SXP/RAL-2-like protein 2 (195 aa).

Residues Glu-162–Arg-195 are disordered. A compositionally biased stretch (gly residues) spans Gly-167–Arg-195.

It belongs to the SXP/RAL-2 family.

In Caenorhabditis elegans, this protein is SXP/RAL-2-like protein 2.